We begin with the raw amino-acid sequence, 512 residues long: Serine--tRNA ligase, cytoplasmic (512 aa).

Methionine 1 carries the N-acetylmethionine modification. Residues arginine 9–serine 61 are interaction with tRNA. Position 241 is a phosphoserine (serine 241). The L-serine site is built by threonine 271 and arginine 302. ATP is bound by residues arginine 302 to glutamate 304 and valine 318 to phenylalanine 321. Lysine 323 is modified (N6-acetyllysine). L-serine is bound at residue glutamate 325. Glutamate 391–serine 394 lines the ATP pocket. Asparagine 427 is a binding site for L-serine. The tract at residues lysine 472–alanine 512 is disordered. The span at glutamate 479–threonine 499 shows a compositional bias: basic and acidic residues. The Nuclear localization signal signature appears at lysine 482 to lysine 494. Over residues leucine 500–alanine 512 the composition is skewed to polar residues.

Belongs to the class-II aminoacyl-tRNA synthetase family. Type-1 seryl-tRNA synthetase subfamily. Homodimer. The tRNA molecule may bind across the dimer. Interacts with SIRT2. Interacts with METTL6; interaction is required for the tRNA N(3)-methylcytidine methyltransferase activity of METTL6.

It is found in the cytoplasm. The protein localises to the nucleus. The enzyme catalyses tRNA(Ser) + L-serine + ATP = L-seryl-tRNA(Ser) + AMP + diphosphate + H(+). It catalyses the reaction tRNA(Sec) + L-serine + ATP = L-seryl-tRNA(Sec) + AMP + diphosphate + H(+). Its pathway is aminoacyl-tRNA biosynthesis; selenocysteinyl-tRNA(Sec) biosynthesis; L-seryl-tRNA(Sec) from L-serine and tRNA(Sec): step 1/1. Its function is as follows. Catalyzes the attachment of serine to tRNA(Ser) in a two-step reaction: serine is first activated by ATP to form Ser-AMP and then transferred to the acceptor end of tRNA(Ser). Is probably also able to aminoacylate tRNA(Sec) with serine, to form the misacylated tRNA L-seryl-tRNA(Sec), which will be further converted into selenocysteinyl-tRNA(Sec). In the nucleus, binds to the VEGFA core promoter and prevents MYC binding and transcriptional activation by MYC. Recruits SIRT2 to the VEGFA promoter, promoting deacetylation of histone H4 at 'Lys-16' (H4K16). Thereby, inhibits the production of VEGFA and sprouting angiogenesis mediated by VEGFA. The chain is Serine--tRNA ligase, cytoplasmic (Sars1) from Rattus norvegicus (Rat).